A 231-amino-acid polypeptide reads, in one-letter code: MGQMVEFEKNGVKVRGYIATPKWAGPAVLVFHEWWGLESPLSNIKEICDKLADEGFVAFAPDFYKGQYADNPDDAGKLMTEMFEKRMDEVDRIFQASVEFVKECRYTYPKKVGITGFCCGGTLAMYFAAKFPEMVDASLPFYGLPQLTQINAENIKVPIFFILAEKDEFVNNDEVIDIAKTVWKNGVDVQVKVFSGVTHAFLNEKREDVYDPKRACEAWELAVNFFKTYLK.

Catalysis depends on residues Cys118, Asp167, and His199.

It belongs to the dienelactone hydrolase family.

It catalyses the reaction 2-(5-oxo-2,5-dihydrofuran-2-ylidene)acetate + H2O = 4-oxohex-2-enedioate + H(+). This is Putative carboxymethylenebutenolidase from Aquifex aeolicus (strain VF5).